The sequence spans 67 residues: UPF0434 protein Lcho_2556 (67 aa).

It belongs to the UPF0434 family.

The polypeptide is UPF0434 protein Lcho_2556 (Leptothrix cholodnii (strain ATCC 51168 / LMG 8142 / SP-6) (Leptothrix discophora (strain SP-6))).